The chain runs to 117 residues: Immunoglobulin lambda variable 1-47 (117 aa).

Positions 1-19 are cleaved as a signal peptide; that stretch reads MAGFPLLLTLLTHCAGSWA. Position 20 is a pyrrolidone carboxylic acid (glutamine 20). A framework-1 region spans residues 20–44; the sequence is QSVLTQPPSASGTPGQRVTISCSGS. Residues 20–117 enclose the Ig-like domain; it reads QSVLTQPPSA…CAAWDDSLSG (98 aa). The cysteines at positions 41 and 108 are disulfide-linked. The segment at 45 to 52 is complementarity-determining-1; sequence SSNIGSNY. Positions 53–69 are framework-2; that stretch reads VYWYQQLPGTAPKLLIY. Positions 70 to 72 are complementarity-determining-2; that stretch reads SNN. Positions 73–108 are framework-3; it reads QRPSGVPDRFSGSKSGTSASLAISGLRSEDEADYYC. The complementarity-determining-3 stretch occupies residues 109 to 117; it reads AAWDDSLSG.

In terms of assembly, immunoglobulins are composed of two identical heavy chains and two identical light chains; disulfide-linked.

The protein localises to the secreted. It localises to the cell membrane. Its function is as follows. V region of the variable domain of immunoglobulin light chains that participates in the antigen recognition. Immunoglobulins, also known as antibodies, are membrane-bound or secreted glycoproteins produced by B lymphocytes. In the recognition phase of humoral immunity, the membrane-bound immunoglobulins serve as receptors which, upon binding of a specific antigen, trigger the clonal expansion and differentiation of B lymphocytes into immunoglobulins-secreting plasma cells. Secreted immunoglobulins mediate the effector phase of humoral immunity, which results in the elimination of bound antigens. The antigen binding site is formed by the variable domain of one heavy chain, together with that of its associated light chain. Thus, each immunoglobulin has two antigen binding sites with remarkable affinity for a particular antigen. The variable domains are assembled by a process called V-(D)-J rearrangement and can then be subjected to somatic hypermutations which, after exposure to antigen and selection, allow affinity maturation for a particular antigen. The protein is Immunoglobulin lambda variable 1-47 of Homo sapiens (Human).